A 947-amino-acid chain; its full sequence is Protocadherin alpha-4 (947 aa).

The first 29 residues, 1–29, serve as a signal peptide directing secretion; sequence MEFSWGSGQESRRLLLLLLLLSAWEAGNG. 6 Cadherin domains span residues 30-133, 134-242, 243-350, 351-455, 456-565, and 588-678; these read QLHY…PPVF, PATQ…APAF, DRTI…VPDL, EFKS…APAF, AQPE…APAL, and DHVV…APKA. At 30-697 the chain is on the extracellular side; it reads QLHYSVSEEA…GPDAALVDVN (668 aa). Cys96 and Cys102 are oxidised to a cystine. Residues Asn139, Asn257, and Asn265 are each glycosylated (N-linked (GlcNAc...) asparagine). Asn548 carries N-linked (GlcNAc...) asparagine glycosylation. The chain crosses the membrane as a helical span at residues 698–718; that stretch reads VYLIIAICAVSSLLVLTLLLY. The Cytoplasmic segment spans residues 719-947; sequence TALRCSAPPT…GNSTTDNSDQ (229 aa). PXXP repeat units follow at residues 734 to 737, 774 to 777, 796 to 799, 829 to 832, 870 to 873, and 888 to 891; these read PGKP, PSLP, PRQP, PGGP, PGNP, and PGSP. The interval 734 to 891 is 6 X 4 AA repeats of P-X-X-P; the sequence is PGKPTLVCSS…PDKFIIPGSP (158 aa). The required for interaction with FYN stretch occupies residues 738–947; sequence TLVCSSAVGS…GNSTTDNSDQ (210 aa). Disordered regions lie at residues 754-805 and 828-853; these read RRPR…DWRY and GPGG…EVSP. The tract at residues 892–947 is disordered; that stretch reads AIISIRQEPANSQIDKSDFITFGKKEETKKKKKKKKGNKTQEKKEKGNSTTDNSDQ. Residues 906-920 are compositionally biased toward basic and acidic residues; the sequence is DKSDFITFGKKEETK.

In terms of assembly, forms homodimers in trans (molecules expressed by two different cells). Forms promiscuous heterodimers in cis (at the plasma membrane of the same cell) with other protocadherins. Interacts with FYN.

It localises to the cell membrane. In terms of biological role, calcium-dependent cell-adhesion protein involved in cells self-recognition and non-self discrimination. Thereby, it is involved in the establishment and maintenance of specific neuronal connections in the brain. This is Protocadherin alpha-4 from Pan troglodytes (Chimpanzee).